The sequence spans 132 residues: Large ribosomal subunit protein bL21 (132 aa).

The disordered stretch occupies residues 111–132; sequence AAEKPARKPRAKKTNEVTTDGA.

The protein belongs to the bacterial ribosomal protein bL21 family. In terms of assembly, part of the 50S ribosomal subunit. Contacts protein L20.

This protein binds to 23S rRNA in the presence of protein L20. The chain is Large ribosomal subunit protein bL21 from Dehalococcoides mccartyi (strain CBDB1).